The sequence spans 401 residues: S-adenosylmethionine synthase (401 aa).

H16 serves as a coordination point for ATP. D18 contacts Mg(2+). E44 contacts K(+). Positions 57 and 100 each coordinate L-methionine. The tract at residues 100–110 (QSPDIAQGVNE) is flexible loop. ATP is bound by residues 174-176 (DAK), 241-242 (RF), D250, 256-257 (RK), A273, and K277. D250 serves as a coordination point for L-methionine. K281 serves as a coordination point for L-methionine.

It belongs to the AdoMet synthase family. Homotetramer; dimer of dimers. The cofactor is Mg(2+). K(+) is required as a cofactor.

Its subcellular location is the cytoplasm. It catalyses the reaction L-methionine + ATP + H2O = S-adenosyl-L-methionine + phosphate + diphosphate. The protein operates within amino-acid biosynthesis; S-adenosyl-L-methionine biosynthesis; S-adenosyl-L-methionine from L-methionine: step 1/1. Its function is as follows. Catalyzes the formation of S-adenosylmethionine (AdoMet) from methionine and ATP. The overall synthetic reaction is composed of two sequential steps, AdoMet formation and the subsequent tripolyphosphate hydrolysis which occurs prior to release of AdoMet from the enzyme. The sequence is that of S-adenosylmethionine synthase from Streptococcus equi subsp. zooepidemicus (strain H70).